A 529-amino-acid polypeptide reads, in one-letter code: Calcium-dependent protein kinase 3 (529 aa).

Residues 1–73 (MGHRHSKSKS…GRILGRPMEE (73 aa)) are disordered. G2 carries N-myristoyl glycine lipidation. The segment covering 39–53 (SGSGTVGSSGSGTGG) has biased composition (gly residues). A Protein kinase domain is found at 78 to 336 (YEFGRELGRG…AAEVLNHPWI (259 aa)). Residues 84–92 (LGRGQFGVT) and K107 each bind ATP. The active-site Proton acceptor is D202. S242 carries the post-translational modification Phosphoserine. An autoinhibitory domain region spans residues 342–372 (ASDKPLDNAVLSRMKQFRAMNKLKKMALKVI). 4 consecutive EF-hand domains span residues 379–414 (EEII…LGSK), 415–450 (ISEA…MNRI), 451–485 (ERED…KYNM), and 486–521 (GDDK…GNPE). Ca(2+)-binding residues include D392, D394, N396, E403, D428, D430, D432, S434, E439, D464, D466, S468, Y470, E475, D499, D501, D503, K505, and E510.

Belongs to the protein kinase superfamily. Ser/Thr protein kinase family. CDPK subfamily. As to quaternary structure, interacts with GHR1. As to expression, expressed in both guard cells and mesophyll cells.

It is found in the cytoplasm. The protein resides in the nucleus. It carries out the reaction L-seryl-[protein] + ATP = O-phospho-L-seryl-[protein] + ADP + H(+). It catalyses the reaction L-threonyl-[protein] + ATP = O-phospho-L-threonyl-[protein] + ADP + H(+). Its activity is regulated as follows. Activated by calcium. Autophosphorylation may play an important role in the regulation of the kinase activity. May play a role in signal transduction pathways that involve calcium as a second messenger. Functions in abscisic acid (ABA) regulation of guard cell S-type anion- and Ca(2+)-permeable channels and stomatal closure. The chain is Calcium-dependent protein kinase 3 from Arabidopsis thaliana (Mouse-ear cress).